The primary structure comprises 173 residues: MAARMDPGIGGDVTLLHTSQLDNLINLARASSLYYLTFGLACCGIELMQTGGPRADVMRFGAIPRASPRQADFMIVAGTLTYKMAERARLLYDQMPEPKYVISMGSCSNCGGLFQLGYSVCKGVDKVIPVDVYVPGCPPRPEALTEGLLRLQEIVRSEPWSTKRRPAAQAEGA.

4 residues coordinate [4Fe-4S] cluster: C42, C43, C107, and C137.

This sequence belongs to the complex I 20 kDa subunit family. NDH-1 is composed of 14 different subunits. Subunits NuoB, C, D, E, F, and G constitute the peripheral sector of the complex. Requires [4Fe-4S] cluster as cofactor.

It is found in the cell inner membrane. The enzyme catalyses a quinone + NADH + 5 H(+)(in) = a quinol + NAD(+) + 4 H(+)(out). In terms of biological role, NDH-1 shuttles electrons from NADH, via FMN and iron-sulfur (Fe-S) centers, to quinones in the respiratory chain. The immediate electron acceptor for the enzyme in this species is believed to be ubiquinone. Couples the redox reaction to proton translocation (for every two electrons transferred, four hydrogen ions are translocated across the cytoplasmic membrane), and thus conserves the redox energy in a proton gradient. The protein is NADH-quinone oxidoreductase subunit B 1 of Anaeromyxobacter sp. (strain K).